The following is a 75-amino-acid chain: UPF0154 protein MMOB4450 (75 aa).

Residues isoleucine 7 to phenylalanine 27 form a helical membrane-spanning segment.

It belongs to the UPF0154 family.

It is found in the cell membrane. The sequence is that of UPF0154 protein MMOB4450 from Mycoplasma mobile (strain ATCC 43663 / 163K / NCTC 11711) (Mesomycoplasma mobile).